The primary structure comprises 238 residues: Peroxisomal coenzyme A diphosphatase NUDT7 (238 aa).

The residue at position 20 (K20) is an N6-succinyllysine. Residues 37-172 form the Nudix hydrolase domain; the sequence is YNKYSVLLPL…VTRLGHRFIN (136 aa). The Nudix box signature appears at 77–98; it reads KRDPTDMDDAATALREAQEEVG. Residues E92 and E96 each contribute to the Mg(2+) site. A Microbody targeting signal motif is present at residues 236-238; the sequence is SRL.

The protein belongs to the Nudix hydrolase family. PCD1 subfamily. Monomer. Mn(2+) is required as a cofactor. Mg(2+) serves as cofactor. In terms of tissue distribution, expressed in liver, kidney, pancreas, pituitary, small intestine, spleen, heart and placenta. Weakly expressed in brain.

It is found in the peroxisome. It carries out the reaction hexanoyl-CoA + H2O = hexanoyl-4'-phosphopantetheine + adenosine 3',5'-bisphosphate + 2 H(+). It catalyses the reaction octanoyl-CoA + H2O = S-octanoyl-4'-phosphopantetheine + adenosine 3',5'-bisphosphate + 2 H(+). The enzyme catalyses butanoyl-CoA + H2O = S-butanoyl-4'-phosphopantetheine + adenosine 3',5'-bisphosphate + 2 H(+). The catalysed reaction is decanoyl-CoA + H2O = decanoyl-4'-phosphopantetheine + adenosine 3',5'-bisphosphate + 2 H(+). It carries out the reaction dodecanoyl-CoA + H2O = S-dodecanoyl-4'-phosphopantetheine + adenosine 3',5'-bisphosphate + 2 H(+). It catalyses the reaction tetradecanoyl-CoA + H2O = tetradecanoyl-4'-phosphopantetheine + adenosine 3',5'-bisphosphate + 2 H(+). The enzyme catalyses choloyl-CoA + H2O = S-choloyl-4'-phosphopantetheine + adenosine 3',5'-bisphosphate + 2 H(+). The catalysed reaction is 3alpha,7alpha,12alpha-trihydroxy-5beta-cholestan-26-oyl-CoA + H2O = 3alpha,7alpha,12alpha-trihydroxy-5beta-cholestan-26-oyl-4'-phosphopantetheine + adenosine 3',5'-bisphosphate + 2 H(+). It carries out the reaction acetyl-CoA + H2O = S-acetyl-4'-phosphopantetheine + adenosine 3',5'-bisphosphate + 2 H(+). It catalyses the reaction CoA + H2O = (R)-4'-phosphopantetheine + adenosine 3',5'-bisphosphate + 2 H(+). The enzyme catalyses propanoyl-CoA + H2O = propanoyl-4'-phosphopantetheine + adenosine 3',5'-bisphosphate + 2 H(+). The catalysed reaction is malonyl-CoA + H2O = malonyl-4'-phosphopantetheine + adenosine 3',5'-bisphosphate + 2 H(+). It carries out the reaction succinyl-CoA + H2O = succinyl-4'-phosphopantetheine + adenosine 3',5'-bisphosphate + 2 H(+). It catalyses the reaction a 5'-end CoA-ribonucleoside in mRNA + H2O = a 5'-end phospho-adenosine-phospho-ribonucleoside in mRNA + (R)-4'-phosphopantetheine + 2 H(+). Inhibited by fluoride. Its function is as follows. Fatty acyl-coenzyme A (CoA) diphosphatase that hydrolyzes fatty acyl-CoA to yield acyl-4'-phosphopantetheine and adenosine 3',5'-bisphosphate. Cleaves CoA, CoA esters and oxidized CoA with similar efficiencies. Preferentially hydrolyzes medium-chain acyl-CoAs and bile acid-CoAs. Has no activity toward NDP-sugars, CDP-alcohols, (deoxy)nucleoside 5'-triphosphates, nucleoside 5'-di or monophosphates, diadenosine polyphosphates, NAD, NADH, NADP, NADPH or thymidine-5'-monophospho-p-nitrophenyl ester. May be required to eliminate oxidized CoA from peroxisomes, or regulate CoA and acyl-CoA levels in this organelle in response to metabolic demand. Does not play a role in U8 snoRNA decapping activity. Binds U8 snoRNA. Exhibits decapping activity towards dpCoA-capped RNAs in vitro. The polypeptide is Peroxisomal coenzyme A diphosphatase NUDT7 (Homo sapiens (Human)).